The sequence spans 149 residues: Large ribosomal subunit protein uL15 (149 aa).

2 stretches are compositionally biased toward basic residues: residues 1-14 (MPTR…HRGH) and 21-30 (RVGKHRKHPG). A disordered region spans residues 1 to 43 (MPTRFSKTRKHRGHVSAGKGRVGKHRKHPGGRGMAGGQHHHRT).

This sequence belongs to the universal ribosomal protein uL15 family. As to quaternary structure, component of the large ribosomal subunit (LSU). Mature N.crassa ribosomes consist of a small (40S) and a large (60S) subunit. The 40S small subunit contains 1 molecule of ribosomal RNA (18S rRNA) and at least 32 different proteins. The large 60S subunit contains 3 rRNA molecules (26S, 5.8S and 5S rRNA) and at least 42 different proteins.

The protein localises to the cytoplasm. Component of the ribosome, a large ribonucleoprotein complex responsible for the synthesis of proteins in the cell. The small ribosomal subunit (SSU) binds messenger RNAs (mRNAs) and translates the encoded message by selecting cognate aminoacyl-transfer RNA (tRNA) molecules. The large subunit (LSU) contains the ribosomal catalytic site termed the peptidyl transferase center (PTC), which catalyzes the formation of peptide bonds, thereby polymerizing the amino acids delivered by tRNAs into a polypeptide chain. The nascent polypeptides leave the ribosome through a tunnel in the LSU and interact with protein factors that function in enzymatic processing, targeting, and the membrane insertion of nascent chains at the exit of the ribosomal tunnel. The protein is Large ribosomal subunit protein uL15 (rpl-28) of Neurospora crassa (strain ATCC 24698 / 74-OR23-1A / CBS 708.71 / DSM 1257 / FGSC 987).